Reading from the N-terminus, the 410-residue chain is Divergent protein kinase domain 1A (410 aa).

At 1–5 (MARLS) the chain is on the cytoplasmic side. Residues 6–26 (YVRIKYLFFSWLAVFIGSWVI) traverse the membrane as a helical segment. The Lumenal portion of the chain corresponds to 27–410 (YVRYNSYTEL…WKKISHTNDS (384 aa)).

This sequence belongs to the DIPK family. Post-translationally, among the many cysteines in the lumenal domain, most are probably involved in disulfide bonds.

It localises to the endoplasmic reticulum membrane. This Xenopus laevis (African clawed frog) protein is Divergent protein kinase domain 1A (dipk1a).